The following is a 116-amino-acid chain: Spexin (116 aa).

An N-terminal signal peptide occupies residues 1-26 (MKGPSVLAVTAVVLLLVLSALENSSG). Positions 27-35 (APQRLSEKR) are excised as a propeptide. Residue Gln49 is modified to Glutamine amide. 2 consecutive propeptides follow at residues 50–116 (GRRF…LFNW) and 74–116 (PDLE…LFNW). The segment at 52-77 (RFLSDQSRRKELADRPPPERRNPDLE) is disordered. Basic and acidic residues predominate over residues 53–75 (FLSDQSRRKELADRPPPERRNPD).

Belongs to the spexin family.

It localises to the secreted. It is found in the extracellular space. The protein resides in the cytoplasmic vesicle. The protein localises to the secretory vesicle. Plays a role as a central modulator of cardiovascular and renal function and nociception. Also plays a role in energy metabolism and storage. Inhibits adrenocortical cell proliferation with minor stimulation on corticosteroid release. Its function is as follows. Acts as a ligand for galanin receptors GALR2 and GALR3. Intracerebroventricular administration of the peptide induces an increase in arterial blood pressure, a decrease in both heart rate and renal excretion and delayed natriuresis. Intraventricular administration of the peptide induces antinociceptive activity. Also induces contraction of muscarinic-like stomach smooth muscles. Intraperitoneal administration of the peptide induces a reduction in food consumption and body weight. Inhibits long chain fatty acid uptake into adipocytes. In terms of biological role, intracerebroventricular administration of the peptide induces a decrease in heart rate, but no change in arterial pressure, and an increase in urine flow rate. Intraventricular administration of the peptide induces antinociceptive activity. The protein is Spexin (Spx) of Mus musculus (Mouse).